Consider the following 153-residue polypeptide: Aspartate carbamoyltransferase regulatory chain (153 aa).

Residues Cys-109, Cys-114, Cys-138, and Cys-141 each contribute to the Zn(2+) site.

This sequence belongs to the PyrI family. As to quaternary structure, contains catalytic and regulatory chains. The cofactor is Zn(2+).

Involved in allosteric regulation of aspartate carbamoyltransferase. In Vibrio parahaemolyticus serotype O3:K6 (strain RIMD 2210633), this protein is Aspartate carbamoyltransferase regulatory chain.